The primary structure comprises 385 residues: Probable caffeine synthase MTL1 (385 aa).

Positions 18, 62, 67, 101, 102, 140, and 141 each coordinate S-adenosyl-L-homocysteine. Residues Y158, Q161, and F162 each contribute to the caffeine site. N179 is a Mg(2+) binding site. Caffeine is bound at residue T238. The Mg(2+) site is built by D261, F263, and N264. Caffeine is bound at residue Y369.

This sequence belongs to the methyltransferase superfamily. Type-7 methyltransferase family. Requires Mg(2+) as cofactor.

The protein operates within alkaloid biosynthesis. In terms of biological role, may be involved in the biosynthesis of caffeine. The polypeptide is Probable caffeine synthase MTL1 (Coffea canephora (Robusta coffee)).